A 138-amino-acid chain; its full sequence is Large ribosomal subunit protein uL16 (138 aa).

A compositionally biased stretch (basic residues) spans 1–17; that stretch reads MLIPRKVKHRKQHHPRQ. Residues 1 to 24 are disordered; the sequence is MLIPRKVKHRKQHHPRQRGIASGG.

The protein belongs to the universal ribosomal protein uL16 family. In terms of assembly, part of the 50S ribosomal subunit.

Its function is as follows. Binds 23S rRNA and is also seen to make contacts with the A and possibly P site tRNAs. This is Large ribosomal subunit protein uL16 from Mycolicibacterium gilvum (strain PYR-GCK) (Mycobacterium gilvum (strain PYR-GCK)).